The chain runs to 343 residues: Uroporphyrinogen decarboxylase (343 aa).

Residues 26–30 (RQAGR), D75, Y150, S205, and H319 each bind substrate.

This sequence belongs to the uroporphyrinogen decarboxylase family. Homodimer.

The protein resides in the cytoplasm. It catalyses the reaction uroporphyrinogen III + 4 H(+) = coproporphyrinogen III + 4 CO2. The protein operates within porphyrin-containing compound metabolism; protoporphyrin-IX biosynthesis; coproporphyrinogen-III from 5-aminolevulinate: step 4/4. Its function is as follows. Catalyzes the decarboxylation of four acetate groups of uroporphyrinogen-III to yield coproporphyrinogen-III. This chain is Uroporphyrinogen decarboxylase, found in Syntrophotalea carbinolica (strain DSM 2380 / NBRC 103641 / GraBd1) (Pelobacter carbinolicus).